A 315-amino-acid chain; its full sequence is tRNA wybutosine-synthesizing protein 5 (315 aa).

Residues 102-267 (DEKYYLRSLG…YDTTDTYGNK (166 aa)) enclose the JmjC domain. Tyrosine 106 contributes to the 2-oxoglutarate binding site. The Fe cation site is built by histidine 160 and aspartate 162. 2-oxoglutarate contacts are provided by asparagine 166 and lysine 175. Fe cation is bound at residue histidine 235.

Belongs to the TYW5 family. In terms of assembly, homodimer. Fe(2+) serves as cofactor.

The catalysed reaction is 7-[(3S)-3-amino-3-carboxypropyl]wyosine(37) in tRNA(Phe) + 2-oxoglutarate + O2 = 7-(2-hydroxy-3-amino-3-carboxypropyl)wyosine(37) in tRNA(Phe) + succinate + CO2. It functions in the pathway tRNA modification; wybutosine-tRNA(Phe) biosynthesis. In terms of biological role, tRNA hydroxylase that acts as a component of the wybutosine biosynthesis pathway. Wybutosine is a hyper modified guanosine with a tricyclic base found at the 3'-position adjacent to the anticodon of eukaryotic phenylalanine tRNA. Catalyzes the hydroxylation of 7-(a-amino-a-carboxypropyl)wyosine (yW-72) into undermodified hydroxywybutosine (OHyW*). OHyW* being further transformed into hydroxywybutosine (OHyW) by LCMT2/TYW4. OHyW is a derivative of wybutosine found in higher eukaryotes. This is tRNA wybutosine-synthesizing protein 5 (Tyw5) from Mus musculus (Mouse).